The following is a 409-amino-acid chain: Arginine deiminase (409 aa).

The Amidino-cysteine intermediate role is filled by C398.

This sequence belongs to the arginine deiminase family.

Its subcellular location is the cytoplasm. The catalysed reaction is L-arginine + H2O = L-citrulline + NH4(+). Its pathway is amino-acid degradation; L-arginine degradation via ADI pathway; carbamoyl phosphate from L-arginine: step 1/2. The protein is Arginine deiminase of Metamycoplasma arthritidis (strain 158L3-1) (Mycoplasma arthritidis).